Reading from the N-terminus, the 185-residue chain is Probable chorismate pyruvate-lyase (185 aa).

Residues R75, L113, and E170 each contribute to the substrate site.

The protein belongs to the UbiC family.

It is found in the cytoplasm. It catalyses the reaction chorismate = 4-hydroxybenzoate + pyruvate. Its pathway is cofactor biosynthesis; ubiquinone biosynthesis. Removes the pyruvyl group from chorismate, with concomitant aromatization of the ring, to provide 4-hydroxybenzoate (4HB) for the ubiquinone pathway. This chain is Probable chorismate pyruvate-lyase, found in Coxiella burnetii (strain RSA 493 / Nine Mile phase I).